A 492-amino-acid polypeptide reads, in one-letter code: Ribose import ATP-binding protein RbsA (492 aa).

ABC transporter domains are found at residues 3–239 (IDMR…VGRK) and 238–492 (RKLE…TGGK). 35–42 (GENGAGKS) contacts ATP.

This sequence belongs to the ABC transporter superfamily. Ribose importer (TC 3.A.1.2.1) family. In terms of assembly, the complex is composed of an ATP-binding protein (RbsA), two transmembrane proteins (RbsC) and a solute-binding protein (RbsB).

The protein localises to the cell membrane. It carries out the reaction D-ribose(out) + ATP + H2O = D-ribose(in) + ADP + phosphate + H(+). Its function is as follows. Part of the ABC transporter complex RbsABC involved in ribose import. Responsible for energy coupling to the transport system. The chain is Ribose import ATP-binding protein RbsA from Streptococcus agalactiae serotype III (strain NEM316).